A 218-amino-acid polypeptide reads, in one-letter code: Uracil-DNA glycosylase (218 aa).

Asp60 functions as the Proton acceptor in the catalytic mechanism.

Belongs to the uracil-DNA glycosylase (UDG) superfamily. UNG family.

It localises to the cytoplasm. It catalyses the reaction Hydrolyzes single-stranded DNA or mismatched double-stranded DNA and polynucleotides, releasing free uracil.. Functionally, excises uracil residues from the DNA which can arise as a result of misincorporation of dUMP residues by DNA polymerase or due to deamination of cytosine. The chain is Uracil-DNA glycosylase from Shewanella oneidensis (strain ATCC 700550 / JCM 31522 / CIP 106686 / LMG 19005 / NCIMB 14063 / MR-1).